The chain runs to 459 residues: Alcohol acyl transferase 1 allele GSa (459 aa).

Catalysis depends on proton acceptor residues histidine 164 and asparagine 385.

Belongs to the plant acyltransferase family. Highly expressed in the cortex and skin of ripe fruit.

The catalysed reaction is butan-1-ol + acetyl-CoA = butyl acetate + CoA. The enzyme catalyses butan-1-ol + butanoyl-CoA = butyl butanoate + CoA. It carries out the reaction butan-1-ol + hexanoyl-CoA = butyl hexanoate + CoA. It catalyses the reaction hexan-1-ol + butanoyl-CoA = hexyl butanoate + CoA. The catalysed reaction is hexan-1-ol + acetyl-CoA = hexyl acetate + CoA. The enzyme catalyses 2-methylbutan-1-ol + butanoyl-CoA = 2-methylbutyl butanoate + CoA. It carries out the reaction ethanol + butanoyl-CoA = ethyl butanoate + CoA. It catalyses the reaction hexanoyl-CoA + ethanol = ethyl hexanoate + CoA. Its function is as follows. Involved in the biosynthesis of volatile esters which confer ripe apple fruit flavor. Alcohol acyl transferase that can use a wide range of alcohols as substrate, including 2-methylbutanol, hexanol and ethanol, to produce esters such as butyl butanoate, butyl hexanoate, hexyl butanoate, ethyl butanoate and ethyl hexanoate and, to some extent, 2-methylbutyl acetate (2MBA), butyl acetate, hexyl acetate and 2-methylbutyl butanoate (2MBB). This Malus domestica (Apple) protein is Alcohol acyl transferase 1 allele GSa.